A 182-amino-acid chain; its full sequence is Orotate phosphoribosyltransferase (182 aa).

5-phospho-alpha-D-ribose 1-diphosphate is bound by residues arginine 91, lysine 92, lysine 95, histidine 97, and 117–125; that span reads EDVTTTGGS. Residues threonine 121 and arginine 149 each contribute to the orotate site.

It belongs to the purine/pyrimidine phosphoribosyltransferase family. PyrE subfamily. As to quaternary structure, homodimer. Mg(2+) serves as cofactor.

The enzyme catalyses orotidine 5'-phosphate + diphosphate = orotate + 5-phospho-alpha-D-ribose 1-diphosphate. Its pathway is pyrimidine metabolism; UMP biosynthesis via de novo pathway; UMP from orotate: step 1/2. In terms of biological role, catalyzes the transfer of a ribosyl phosphate group from 5-phosphoribose 1-diphosphate to orotate, leading to the formation of orotidine monophosphate (OMP). This chain is Orotate phosphoribosyltransferase, found in Pyrococcus abyssi (strain GE5 / Orsay).